A 153-amino-acid chain; its full sequence is Putative phosphatidylglycerol/phosphatidylinositol transfer protein DDB_G0285639 (153 aa).

A signal peptide spans 1-21; sequence MIIKILLLIISISLFLNISIG. Asparagine 17, asparagine 61, asparagine 87, asparagine 117, and asparagine 140 each carry an N-linked (GlcNAc...) asparagine glycan.

This sequence belongs to the NPC2 family. Monomer.

In terms of biological role, catalyzes the intermembrane transfer of phosphatidylglycerol and phosphatidylinositol. This is Putative phosphatidylglycerol/phosphatidylinositol transfer protein DDB_G0285639 from Dictyostelium discoideum (Social amoeba).